Consider the following 37-residue polypeptide: Photosystem II reaction center protein M (37 aa).

Residues 7–27 (AFIAVLLFLAVPTAFLLIPYV) form a helical membrane-spanning segment.

It belongs to the PsbM family. PSII is composed of 1 copy each of membrane proteins PsbA, PsbB, PsbC, PsbD, PsbE, PsbF, PsbH, PsbI, PsbJ, PsbK, PsbL, PsbM, PsbT, PsbX, PsbY, PsbZ, Psb30/Ycf12, at least 3 peripheral proteins of the oxygen-evolving complex and a large number of cofactors. It forms dimeric complexes.

It localises to the plastid. It is found in the chloroplast thylakoid membrane. In terms of biological role, one of the components of the core complex of photosystem II (PSII). PSII is a light-driven water:plastoquinone oxidoreductase that uses light energy to abstract electrons from H(2)O, generating O(2) and a proton gradient subsequently used for ATP formation. It consists of a core antenna complex that captures photons, and an electron transfer chain that converts photonic excitation into a charge separation. This subunit is found at the monomer-monomer interface. The chain is Photosystem II reaction center protein M from Pinus thunbergii (Japanese black pine).